The chain runs to 476 residues: MFRLNSLSALAELAVGSRWYHGGSQPIQIRRRLMMVAFLGASAVTASTGLLWKRAHAESPPCVDNLKSDIGDKGKNKDEGDVCNHEKKTADLAPHPEEKKKKRSGFRDRKVMEYENRIRAYSTPDKIFRYFATLKVISEPGEAEVFMTPEDFVRSITPNEKQPEHLGLDQYIIKRFDGKKISQEREKFADEGSIFYTLGECGLISFSDYIFLTTVLSTPQRNFEIAFKMFDLNGDGEVDMEEFEQVQSIIRSQTSMGMRHRDRPTTGNTLKSGLCSALTTYFFGADLKGKLTIKNFLEFQRKLQHDVLKLEFERHDPVDGRITERQFGGMLLAYSGVQSKKLTAMQRQLKKHFKEGKGLTFQEVENFFTFLKNINDVDTALSFYHMAGASLDKVTMQQVARTVAKVELSDHVCDVVFALFDCDGNGELSNKEFVSIMKQRLMRGLEKPKDMGFTRLMQAMWKCAQETAWDFALPKQ.

Residues 1–33 (MFRLNSLSALAELAVGSRWYHGGSQPIQIRRRL) constitute a mitochondrion transit peptide. The tract at residues 68–106 (SDIGDKGKNKDEGDVCNHEKKTADLAPHPEEKKKKRSGF) is disordered. Residues 99-110 (KKKKRSGFRDRK) are polybasic region. The residue at position 122 (serine 122) is a Phosphoserine. Positions 126–129 (KIFR) are k/R-ring. The EF-hand 1 domain maps to 218–253 (TPQRNFEIAFKMFDLNGDGEVDMEEFEQVQSIIRSQ). Aspartate 231, asparagine 233, aspartate 235, glutamate 237, and glutamate 242 together coordinate Ca(2+). The tract at residues 259-263 (RHRDR) is k/R-ring. In terms of domain architecture, EF-hand 2 spans 408-443 (LSDHVCDVVFALFDCDGNGELSNKEFVSIMKQRLMR). 5 residues coordinate Ca(2+): aspartate 421, aspartate 423, asparagine 425, glutamate 427, and glutamate 432. Arginine 455 bears the Asymmetric dimethylarginine mark. A C-helix region region spans residues 455–465 (RLMQAMWKCAQ).

It belongs to the MICU1 family. MICU1 subfamily. As to quaternary structure, heterodimer; disulfide-linked; heterodimerizes with MICU2 or MICU3. Homodimer; disulfide-linked. Component of the uniplex complex, composed of MCU, EMRE/SMDT1, MICU1 and MICU2 (or MICU3) in a 4:4:1:1 stoichiometry. The composition of calcium sensors within the uniplex complex can differ depending on tissues: a MICU1 homodimer can be present instead of the MICU1-MICU2 heterodimer in skeletal-muscle and kidney. MICU1 is recruited to the uniplex complex by EMRE/SMDT1, and it associates with MCU at low calcium levels, occluding the pore of the MCU channel. Associates with the MICOS complex. Interacts with SLC25A23. Interacts with CHCHD4/MIA40; which introduces the interchain disulfide bond with MICU2. Interacts (when methylated) with UCP2; leading to decrease the calcium sensitivity of MICU1. Post-translationally, phosphorylation at Ser-122 by AKT1 impairs its maturation and stability. In terms of processing, asymmetric dimethylation at Arg-455 by PRMT1 decreases the calcium sensitivity of MICU1 by promoting interaction with UCP2. Degraded by YME1L1 when not complexed as homodimer or heterodimer. Not degraded when complexed as homodimer or heterodimer; the presence of the interchain disulfide bond protecting MICU1 from degradation by YME1L1. As to expression, expressed in epithelial cell lines. Strongly expressed in epidermal keratinocytes and dermal endothelial cells.

It localises to the mitochondrion intermembrane space. It is found in the mitochondrion inner membrane. Its activity is regulated as follows. Activated by spermine, kaempferol and SB202190, which bind MICU1 and prevent MCU pore occlusion in absence of calcium. In terms of biological role, calcium sensor of the mitochondrial calcium uniporter (MCU) channel, which senses calcium level via its EF-hand domains. MICU1 and MICU2 (or MICU3) form a disulfide-linked heterodimer that stimulates and inhibits MCU activity, depending on the concentration of calcium. At low calcium levels, MICU1 occludes the pore of the MCU channel, preventing mitochondrial calcium uptake. At higher calcium levels, calcium-binding to MICU1 and MICU2 (or MICU3) induces a conformational change that weakens MCU-MICU1 interactions and moves the MICU1-MICU2 heterodimer away from the pore, allowing calcium permeation through the MCU channel. Also required to protect against manganese toxicity by preventing manganese uptake by MCU: mechanistically, manganese-binding to its EF-hand domains does not induce any conformational change, maintaining MCU pore occlusion. Also acts as a barrier for inhibitors of the MCU channel, such as ruthenium red or its derivative Ru360. Acts as a regulator of mitochondrial cristae structure independently of its ability to regulate the mitochondrial calcium uniporter channel. Regulates glucose-dependent insulin secretion in pancreatic beta-cells by regulating mitochondrial calcium uptake. Induces T-helper 1-mediated autoreactivity, which is accompanied by the release of IFNG. Isoform that regulates mitochondrial calcium uniporter (MCU) in the skeletal muscle. Compared to other isoforms, this isoform has higher affinity for calcium, promoting mitochondrial calcium uptake at lower calcium concentrations. This allows a rapid response of mitochondrial metabolism and ensures sustained ATP production needed for resistance and strenuous exercise. The protein is Calcium uptake protein 1, mitochondrial of Homo sapiens (Human).